A 287-amino-acid chain; its full sequence is DDRGK domain-containing protein 1 (287 aa).

Over 1-5 (MDLIL) the chain is Lumenal. The chain crosses the membrane as a helical span at residues 6 to 26 (LLGIAVALLVILVTLFFFTKG). Residues 27–287 (KGSQESGKYN…LINLVPVSAE (261 aa)) lie on the Cytoplasmic side of the membrane. 2 disordered regions span residues 28-102 (GSQE…KRAK) and 135-164 (KVEA…RQEH). A compositionally biased stretch (low complexity) spans 44-68 (AQAAPRRAQVVRNQRNRARVAAAPA). The span at 85 to 102 (IPHADFNGEKMGAKKRAK) shows a compositional bias: basic and acidic residues.

It belongs to the DDRGK1 family. As to quaternary structure, interacts with Atg9; the interaction is transient.

It localises to the endoplasmic reticulum membrane. Its function is as follows. Substrate adapter for ufmylation, the covalent attachment of the ubiquitin-like modifier UFM1 to substrate proteins. Required for ufmylation of Atg9; protects the nervous system during aging, possibly by stabilizing Atg9 and supporting its function. The polypeptide is DDRGK domain-containing protein 1 (Culex quinquefasciatus (Southern house mosquito)).